We begin with the raw amino-acid sequence, 318 residues long: Protoheme IX farnesyltransferase (318 aa).

The next 9 membrane-spanning stretches (helical) occupy residues 37–57 (VMEL…RGLP), 59–79 (IWLI…AGAF), 108–128 (EALV…WFGA), 131–151 (LAGL…TLIL), 158–178 (NIVW…AAVT), 183–203 (WPAI…YWPL), 216–238 (VPML…YTWA), 249–269 (LGHA…WFLL), and 296–316 (ISYL…GMPL).

The protein belongs to the UbiA prenyltransferase family. Protoheme IX farnesyltransferase subfamily.

The protein localises to the cell membrane. The enzyme catalyses heme b + (2E,6E)-farnesyl diphosphate + H2O = Fe(II)-heme o + diphosphate. The protein operates within porphyrin-containing compound metabolism; heme O biosynthesis; heme O from protoheme: step 1/1. In terms of biological role, converts heme B (protoheme IX) to heme O by substitution of the vinyl group on carbon 2 of heme B porphyrin ring with a hydroxyethyl farnesyl side group. This Renibacterium salmoninarum (strain ATCC 33209 / DSM 20767 / JCM 11484 / NBRC 15589 / NCIMB 2235) protein is Protoheme IX farnesyltransferase.